The primary structure comprises 879 residues: DNA mismatch repair protein MutS (879 aa).

629–636 contributes to the ATP binding site; it reads GPNMGGKS.

The protein belongs to the DNA mismatch repair MutS family.

Functionally, this protein is involved in the repair of mismatches in DNA. It is possible that it carries out the mismatch recognition step. This protein has a weak ATPase activity. The sequence is that of DNA mismatch repair protein MutS from Erythrobacter litoralis (strain HTCC2594).